We begin with the raw amino-acid sequence, 935 residues long: MFGRLLLLGILFHVVFLKSIFDIYFVTPLIHGMKQYSAGEAPAKRLFLIVGDGLRPDKLLQPHSEKVIGEEQTYAAPFLRSIIQNNGTFGVSHTRVPTESRPGHVALIAGFYEDVSAVTKGWKKNPVNFDSVFNQSRHTYSFGSEDILPMFSEGASDPSRVDTFMYSSELEDFSSNGIVLDEWVFDRLDELLAQSLEDKELWDMLHRDKIVFFLHLLGIDTIGHNKHPDSVEYVENIQYIDGKIQELVDKMNNYYNNDGASSWVFTADHGMSDFGSHGDGNLDNTRTPIIAWGAGIQSPTHEKNYGHDEYSLPWNLTEIKRIDIQQADIAALMSYLVGLNFPVNSVGQIPLDYLDCSSRRKAEVALMNALEIGEQYNLKSASKDQTSIFFRPYSPLRNYTEVQASFYNSVIADIESGEYEIAIEHCFHFSQTVLSGLRYLQRYDWLLLRSIVFFGYLSWIGYVICFVFSLNIEPSSKIVKPVSVVKRVAFNIPFLLICIFFYIQSSPPFYYGYALFPTIFLQLIHSIFPNTKLGFKNFLTVAKQKHGFSLLKILFISLCILCLLQFIVYSYFHREGFSVILMGLAAWPWLLHADYAFSHKTISVSWSVLTSLLCFFTILPVNKKESLLFIFAGGFAMSVAGVFYILYRRNQAFQYSSTVTNKQLVLQVLIIMATVPVTLKIADSLQRNIAIPPILRLVAFGLFITSYIIPSHHIRSCKHYFLDRLAILFLTFSPTMCMLSISFEALFYVVLFITLGLWMELETELQKYTEQLHPEYSRKKDAKFHLSLSHIRISLFFYIFINVAFFGTGNVASLSTFALDSVKRFIPVFNPVTQGALLMYTILVPFIALSAAFGIMNKRLGGIQQVTFFLAVGMADIVTINFFYLVKDEGSWKDIGVSISHFCISNFLILFITALEHASAILCKNITYTIHEKVN.

Residues methionine 1–leucine 5 lie on the Cytoplasmic side of the membrane. Residues leucine 6–valine 26 form a helical membrane-spanning segment. Residues threonine 27–arginine 449 are Lumenal-facing. Asparagine 86, asparagine 134, asparagine 315, and asparagine 398 each carry an N-linked (GlcNAc...) asparagine glycan. The helical transmembrane segment at serine 450 to leucine 470 threads the bilayer. Topologically, residues asparagine 471 to serine 483 are cytoplasmic. The chain crosses the membrane as a helical span at residues valine 484–isoleucine 503. The Lumenal segment spans residues glutamine 504–phenylalanine 509. A helical transmembrane segment spans residues tyrosine 510–asparagine 530. Residues threonine 531–glycine 547 are Cytoplasmic-facing. Residues phenylalanine 548–valine 568 form a helical membrane-spanning segment. Residues tyrosine 569 to glycine 576 lie on the Lumenal side of the membrane. A helical membrane pass occupies residues phenylalanine 577 to phenylalanine 597. Over serine 598 to lysine 600 the chain is Cytoplasmic. The helical transmembrane segment at threonine 601–valine 621 threads the bilayer. At asparagine 622 to serine 626 the chain is on the lumenal side. Residues leucine 627–tyrosine 647 traverse the membrane as a helical segment. Topologically, residues arginine 648–glutamine 663 are cytoplasmic. The helical transmembrane segment at leucine 664–serine 684 threads the bilayer. Topologically, residues leucine 685–asparagine 688 are lumenal. The helical transmembrane segment at isoleucine 689–isoleucine 709 threads the bilayer. Over proline 710–cysteine 737 the chain is Cytoplasmic. The chain crosses the membrane as a helical span at residues methionine 738–tryptophan 758. The Lumenal portion of the chain corresponds to methionine 759–arginine 792. A helical transmembrane segment spans residues isoleucine 793 to serine 813. Residues leucine 814–glycine 835 lie on the Cytoplasmic side of the membrane. The chain crosses the membrane as a helical span at residues alanine 836–methionine 856. Over asparagine 857 to glutamine 865 the chain is Lumenal. A helical transmembrane segment spans residues valine 866–valine 886. Over lysine 887–aspartate 894 the chain is Cytoplasmic. A helical membrane pass occupies residues isoleucine 895–leucine 915. Residues glutamate 916–asparagine 935 are Lumenal-facing. An N-linked (GlcNAc...) asparagine glycan is attached at asparagine 925.

This sequence belongs to the PIGG/PIGN/PIGO family. PIGN subfamily.

The protein resides in the endoplasmic reticulum membrane. Its pathway is glycolipid biosynthesis; glycosylphosphatidylinositol-anchor biosynthesis. In terms of biological role, ethanolamine phosphate transferase involved in glycosylphosphatidylinositol-anchor biosynthesis. Transfers ethanolamine phosphate to the first alpha-1,4-linked mannose of the glycosylphosphatidylinositol precursor of GPI-anchor. This is GPI ethanolamine phosphate transferase 1 (its8) from Schizosaccharomyces pombe (strain 972 / ATCC 24843) (Fission yeast).